A 473-amino-acid polypeptide reads, in one-letter code: Probable glycine dehydrogenase (decarboxylating) subunit 2 (473 aa).

Lys266 carries the N6-(pyridoxal phosphate)lysine modification.

Belongs to the GcvP family. C-terminal subunit subfamily. As to quaternary structure, the glycine cleavage system is composed of four proteins: P, T, L and H. In this organism, the P 'protein' is a heterodimer of two subunits. Pyridoxal 5'-phosphate serves as cofactor.

It carries out the reaction N(6)-[(R)-lipoyl]-L-lysyl-[glycine-cleavage complex H protein] + glycine + H(+) = N(6)-[(R)-S(8)-aminomethyldihydrolipoyl]-L-lysyl-[glycine-cleavage complex H protein] + CO2. Functionally, the glycine cleavage system catalyzes the degradation of glycine. The P protein binds the alpha-amino group of glycine through its pyridoxal phosphate cofactor; CO(2) is released and the remaining methylamine moiety is then transferred to the lipoamide cofactor of the H protein. This is Probable glycine dehydrogenase (decarboxylating) subunit 2 from Thermus thermophilus (strain ATCC BAA-163 / DSM 7039 / HB27).